The primary structure comprises 347 residues: Heat-inducible transcription repressor HrcA (347 aa).

The protein belongs to the HrcA family.

In terms of biological role, negative regulator of class I heat shock genes (grpE-dnaK-dnaJ and groELS operons). Prevents heat-shock induction of these operons. This Laribacter hongkongensis (strain HLHK9) protein is Heat-inducible transcription repressor HrcA.